The sequence spans 329 residues: MLRVFIFFVFLGSGLAGRIKPQITCKYFISENNTWYKYNVTILNGTIVLPAYNMIPTKAAGISCTCHDIDYLQKNNISIHYNTSILKTFQDIRIIRCGMKNISEIAGGFGKELKFLDLRYNNLQFIDYNILRKLIRSNTPTYLYYNNLMCGKRNCPLYYFLLKQEQTYLKLLPQFFLRRISFSNNNTYLYHFLSCGNKPGHEFLEYQTKYCRTKFPEINITVNQLITKKNTERYKNCYPFVLVSILCSCISFLFLIICLLRSICKKYSCTKQGKSTHKYIPLIPSYTFSLKKHRHPETAVVEDHTTTANSPIVYIPTTEEKKASCSRRK.

Residues 1-31 (MLRVFIFFVFLGSGLAGRIKPQITCKYFISE) form the signal peptide. N-linked (GlcNAc...) asparagine; by host glycosylation is found at asparagine 32, asparagine 39, asparagine 44, asparagine 76, asparagine 82, and asparagine 101. Residues 32 to 239 (NNTWYKYNVT…NTERYKNCYP (208 aa)) are Extracellular-facing. Residues 112-133 (ELKFLDLRYNNLQFIDYNILRK) form an LRR repeat. Residues asparagine 185 and asparagine 219 are each glycosylated (N-linked (GlcNAc...) asparagine; by host). A disulfide bond links cysteine 195 and cysteine 237. A helical transmembrane segment spans residues 240-260 (FVLVSILCSCISFLFLIICLL). Residues 261 to 329 (RSICKKYSCT…EKKASCSRRK (69 aa)) are Cytoplasmic-facing.

This sequence belongs to the asfivirus I329L family. In terms of processing, highly glycosylated.

The protein resides in the host endoplasmic reticulum membrane. Its subcellular location is the host Golgi apparatus membrane. In terms of biological role, viral TLR3 homolog that probably prevents TLR3 dimerization and subsequent induction of IFN. Inhibits dsRNA-stimulated activation of NF-kB and IRF3. In Ornithodoros (relapsing fever ticks), this protein is Transmembrane protein I329L.